Here is a 603-residue protein sequence, read N- to C-terminus: Rab proteins geranylgeranyltransferase component A (603 aa).

Position 470 is a phosphoserine (serine 470).

The protein belongs to the Rab GDI family.

In terms of biological role, substrate-binding subunit (component A) of the Rab geranylgeranyltransferase (GGTase) complex. Binds unprenylated Rab proteins and presents the substrate peptide to the catalytic component B. The component A is thought to be regenerated by transferring its prenylated Rab back to the donor membrane. The polypeptide is Rab proteins geranylgeranyltransferase component A (MRS6) (Saccharomyces cerevisiae (strain ATCC 204508 / S288c) (Baker's yeast)).